The primary structure comprises 542 residues: Thermosome subunit (542 aa).

Belongs to the TCP-1 chaperonin family. In terms of assembly, forms an oligomeric complex of eight-membered rings.

Molecular chaperone; binds unfolded polypeptides in vitro, and has a weak ATPase activity. The polypeptide is Thermosome subunit (ths) (Methanocaldococcus jannaschii (strain ATCC 43067 / DSM 2661 / JAL-1 / JCM 10045 / NBRC 100440) (Methanococcus jannaschii)).